The primary structure comprises 509 residues: MQQNMIIPSFWTGTAIIGLVACAYVSYQCLLSPLARFPGPFAAKLSKGWRAYKTANGQWHRKLVDLHRKYGHVVRIAPNELSVGDPSSFRKIYSPAEAGNGFNKAACYSVVQGNRPFDLTGERNEKVHSEQRKLVATAYSMSSMVHFESKVNVVIETVIHKLEARCRKTIDLGHWLQMWAFEPTRPLLNSLKPDVIGSVSFSQPFGYVESGDDEGVFKRIQNAMGSAAWLMHAGWLFRLHQKLIPICGNWLAVNDRNGYFFQVACREVSGRINRGGDDKDIIGQLLETQKIKPQLKDLDISFMMTSNVFAGSDSTSIAFQSIFYLLLTHPAAHDRLMRELREREEKGELSDPVSFQEAESWPYLQAIIYEAMRLYAPAAFVLDRVVPPEGMMIEDKFVPGNTVVGSSAWVIHRNPEIWGPDVDTFRPERWLDDSTFLIDKKGALQPFSFGPRNCLGRHLAYQEIKLALAKLVYHFDLELNPKCGDWDEQKNFTFWVKPPLWVNLHPVKS.

A helical membrane pass occupies residues 5-25 (MIIPSFWTGTAIIGLVACAYV). Residue Cys-454 coordinates heme. N-linked (GlcNAc...) asparagine glycosylation occurs at Asn-491.

The protein belongs to the cytochrome P450 family. Requires heme as cofactor.

It is found in the membrane. The protein operates within secondary metabolite biosynthesis. Functionally, cytochrome P450 monooxygenase; part of the gene cluster that mediates the biosynthesis of heptelidic acid (HA), a sesquiterpene lactone that acts as an inhibitor of glyceraldehyde-3-phosphatedehydrogenase (GAPDH) and a growth inhibitor of the salt-tolerant lactic acid bacteria in soy sauce brewing. The sequence is that of Cytochrome P450 monooxygenase hepC from Aspergillus oryzae (strain ATCC 42149 / RIB 40) (Yellow koji mold).